Reading from the N-terminus, the 492-residue chain is Probable cytochrome P450 513A3 (492 aa).

Residues 1–21 traverse the membrane as a helical segment; it reads MTSLTLYLIIFSIILYLFVNR. Residue cysteine 437 coordinates heme.

Belongs to the cytochrome P450 family. Heme is required as a cofactor.

It is found in the membrane. This chain is Probable cytochrome P450 513A3 (cyp513A3), found in Dictyostelium discoideum (Social amoeba).